The chain runs to 428 residues: Sulfhydrogenase 1 subunit alpha (428 aa).

The Ni(2+) site is built by C65, C68, C418, and C421. C68 contributes to the Fe cation binding site. C421 provides a ligand contact to Fe cation.

This sequence belongs to the [NiFe]/[NiFeSe] hydrogenase large subunit family. In terms of assembly, heterotetramer of alpha, beta, gamma and delta subunits. The nickel-containing alpha and delta subunits constitute the hydrogenase activity. The beta and gamma subunits (flavin-containing dimer) constitute the sulfur reductase activity. It depends on Ni(2+) as a cofactor. Fe cation serves as cofactor.

The protein resides in the cytoplasm. The catalysed reaction is H2 + NADP(+) = NADPH + H(+). In terms of biological role, part of a bifunctional enzyme complex that functions as an NADPH-dependent hydrogen-evolving hydrogenase with sulfur-reducing activity. May play a role in hydrogen cycling during fermentative growth. Activity not exhibited with NAD. The alpha and delta subunits form the hydrogenase component that catalyzes the reduction of protons to evolve hydrogen. This is Sulfhydrogenase 1 subunit alpha from Pyrococcus furiosus (strain ATCC 43587 / DSM 3638 / JCM 8422 / Vc1).